A 299-amino-acid polypeptide reads, in one-letter code: Lipoyl synthase (299 aa).

[4Fe-4S] cluster contacts are provided by cysteine 34, cysteine 39, cysteine 45, cysteine 60, cysteine 64, cysteine 67, and serine 273. The 217-residue stretch at 46–262 folds into the Radical SAM core domain; sequence WNKKHATVMI…KYVAYSKGFL (217 aa).

It belongs to the radical SAM superfamily. Lipoyl synthase family. The cofactor is [4Fe-4S] cluster.

It localises to the cytoplasm. The enzyme catalyses [[Fe-S] cluster scaffold protein carrying a second [4Fe-4S](2+) cluster] + N(6)-octanoyl-L-lysyl-[protein] + 2 oxidized [2Fe-2S]-[ferredoxin] + 2 S-adenosyl-L-methionine + 4 H(+) = [[Fe-S] cluster scaffold protein] + N(6)-[(R)-dihydrolipoyl]-L-lysyl-[protein] + 4 Fe(3+) + 2 hydrogen sulfide + 2 5'-deoxyadenosine + 2 L-methionine + 2 reduced [2Fe-2S]-[ferredoxin]. Its pathway is protein modification; protein lipoylation via endogenous pathway; protein N(6)-(lipoyl)lysine from octanoyl-[acyl-carrier-protein]: step 2/2. In terms of biological role, catalyzes the radical-mediated insertion of two sulfur atoms into the C-6 and C-8 positions of the octanoyl moiety bound to the lipoyl domains of lipoate-dependent enzymes, thereby converting the octanoylated domains into lipoylated derivatives. The chain is Lipoyl synthase from Ehrlichia canis (strain Jake).